We begin with the raw amino-acid sequence, 94 residues long: U1-theraphotoxin-Sp1a (94 aa).

The signal sequence occupies residues 1-22 (MIFLLPSIISVMLLAEPVLMLG). Residues 23-58 (DTEDADLMEMVQLSRPFFNPIIRAVELVELREERQR) constitute a propeptide that is removed on maturation. 3 disulfides stabilise this stretch: Cys-60–Cys-78, Cys-67–Cys-83, and Cys-77–Cys-88. At Val-92 the chain carries Valine amide.

Belongs to the neurotoxin 14 (magi-1) family. OAIP-1 subfamily. As to expression, expressed by the venom gland.

The protein resides in the secreted. In terms of biological role, probable ion channel inhibitor. Shows insecticidal activity. Acts synergistically with the neonicotinoid insecticide imidacloprid. Is neither a repellent that repels insects nor an attractant that is preferentially consumed by insects. Is very stable. This chain is U1-theraphotoxin-Sp1a, found in Selenotypus plumipes (Australian featherleg tarantula).